Here is a 618-residue protein sequence, read N- to C-terminus: 1-deoxy-D-xylulose-5-phosphate synthase (618 aa).

Residues His77 and 118–120 (GHS) each bind thiamine diphosphate. Residue Asp149 coordinates Mg(2+). Residues 150–151 (GA), Asn178, Tyr285, and Glu367 each bind thiamine diphosphate. Position 178 (Asn178) interacts with Mg(2+).

This sequence belongs to the transketolase family. DXPS subfamily. Homodimer. Mg(2+) serves as cofactor. The cofactor is thiamine diphosphate.

It catalyses the reaction D-glyceraldehyde 3-phosphate + pyruvate + H(+) = 1-deoxy-D-xylulose 5-phosphate + CO2. It participates in metabolic intermediate biosynthesis; 1-deoxy-D-xylulose 5-phosphate biosynthesis; 1-deoxy-D-xylulose 5-phosphate from D-glyceraldehyde 3-phosphate and pyruvate: step 1/1. Catalyzes the acyloin condensation reaction between C atoms 2 and 3 of pyruvate and glyceraldehyde 3-phosphate to yield 1-deoxy-D-xylulose-5-phosphate (DXP). The protein is 1-deoxy-D-xylulose-5-phosphate synthase of Idiomarina loihiensis (strain ATCC BAA-735 / DSM 15497 / L2-TR).